Reading from the N-terminus, the 484-residue chain is ATP synthase subunit beta (484 aa).

Residue 168–175 (GGAGVGKT) coordinates ATP.

The protein belongs to the ATPase alpha/beta chains family. As to quaternary structure, F-type ATPases have 2 components, CF(1) - the catalytic core - and CF(0) - the membrane proton channel. CF(1) has five subunits: alpha(3), beta(3), gamma(1), delta(1), epsilon(1). CF(0) has three main subunits: a(1), b(2) and c(9-12). The alpha and beta chains form an alternating ring which encloses part of the gamma chain. CF(1) is attached to CF(0) by a central stalk formed by the gamma and epsilon chains, while a peripheral stalk is formed by the delta and b chains.

It localises to the cell membrane. It carries out the reaction ATP + H2O + 4 H(+)(in) = ADP + phosphate + 5 H(+)(out). Produces ATP from ADP in the presence of a proton gradient across the membrane. The catalytic sites are hosted primarily by the beta subunits. The protein is ATP synthase subunit beta of Pseudarthrobacter chlorophenolicus (strain ATCC 700700 / DSM 12829 / CIP 107037 / JCM 12360 / KCTC 9906 / NCIMB 13794 / A6) (Arthrobacter chlorophenolicus).